A 306-amino-acid chain; its full sequence is Homeobox protein HMX3 (306 aa).

The segment at 95–181 is disordered; sequence HTPRTEVPDK…DKKPCRKKKT (87 aa). 2 stretches are compositionally biased toward basic and acidic residues: residues 117–143 and 153–174; these read GERD…KSPE and EEGK…PDKK. A DNA-binding region (homeobox) is located at residues 178-237; that stretch reads KKKTRTVFSRSQVFQLESTFDMKRYLSSSERAGLAASLHLTETQVKIWFQNRRNKWKRQL.

This sequence belongs to the HMX homeobox family.

The protein resides in the nucleus. Its function is as follows. Transcription factor involved in specification of neuronal cell types and which is required for inner ear and hypothalamus development. Binds to the 5'-CAAGTG-3' core sequence. May act as a stage-specific inhibitor of anf1 in the anterior neural plate during the development. In Xenopus laevis (African clawed frog), this protein is Homeobox protein HMX3 (hmx3).